The following is a 109-amino-acid chain: Flagellar hook-basal body complex protein FliE (109 aa).

It belongs to the FliE family.

Its subcellular location is the bacterial flagellum basal body. The sequence is that of Flagellar hook-basal body complex protein FliE from Pseudomonas fluorescens (strain Pf0-1).